A 195-amino-acid polypeptide reads, in one-letter code: Probable cobalt-precorrin-6B C(15)-methyltransferase (decarboxylating) (195 aa).

Residues T24, 48 to 52, D72, and A101 contribute to the S-adenosyl-L-methionine site; that span reads GCGTG.

It belongs to the methyltransferase superfamily. Archaeal-type CbiT family.

It carries out the reaction Co-precorrin-6B + S-adenosyl-L-methionine = Co-precorrin-7 + S-adenosyl-L-homocysteine + CO2. The protein operates within cofactor biosynthesis; adenosylcobalamin biosynthesis; cob(II)yrinate a,c-diamide from sirohydrochlorin (anaerobic route): step 8/10. In terms of biological role, catalyzes the methylation of C-15 in cobalt-precorrin-6B followed by the decarboxylation of C-12 to form cobalt-precorrin-7. This is Probable cobalt-precorrin-6B C(15)-methyltransferase (decarboxylating) from Pyrobaculum calidifontis (strain DSM 21063 / JCM 11548 / VA1).